The chain runs to 463 residues: Glutamate--tRNA ligase 1 (463 aa).

The 'HIGH' region signature appears at 10–20 (PSPTGYLHIGG). The short motif at 238-242 (KLSKR) is the 'KMSKS' region element. Residue K241 participates in ATP binding.

It belongs to the class-I aminoacyl-tRNA synthetase family. Glutamate--tRNA ligase type 1 subfamily. In terms of assembly, monomer.

The protein resides in the cytoplasm. The catalysed reaction is tRNA(Glu) + L-glutamate + ATP = L-glutamyl-tRNA(Glu) + AMP + diphosphate. In terms of biological role, catalyzes the attachment of glutamate to tRNA(Glu) in a two-step reaction: glutamate is first activated by ATP to form Glu-AMP and then transferred to the acceptor end of tRNA(Glu). The chain is Glutamate--tRNA ligase 1 from Helicobacter pylori (strain HPAG1).